Reading from the N-terminus, the 204-residue chain is Transcriptional regulator GfcR (204 aa).

The protein belongs to the purine/pyrimidine phosphoribosyltransferase family. GfcR subfamily.

In Methanoculleus marisnigri (strain ATCC 35101 / DSM 1498 / JR1), this protein is Transcriptional regulator GfcR.